The primary structure comprises 470 residues: UDP-N-acetylmuramoylalanine--D-glutamate ligase (470 aa).

121–127 (GTNGKST) contacts ATP.

This sequence belongs to the MurCDEF family.

Its subcellular location is the cytoplasm. It catalyses the reaction UDP-N-acetyl-alpha-D-muramoyl-L-alanine + D-glutamate + ATP = UDP-N-acetyl-alpha-D-muramoyl-L-alanyl-D-glutamate + ADP + phosphate + H(+). It functions in the pathway cell wall biogenesis; peptidoglycan biosynthesis. Cell wall formation. Catalyzes the addition of glutamate to the nucleotide precursor UDP-N-acetylmuramoyl-L-alanine (UMA). The chain is UDP-N-acetylmuramoylalanine--D-glutamate ligase from Rhizobium johnstonii (strain DSM 114642 / LMG 32736 / 3841) (Rhizobium leguminosarum bv. viciae).